Consider the following 83-residue polypeptide: Omega-agatoxin-Aa4b (83 aa).

The signal sequence occupies residues 1 to 20 (MKLCMTLLITAIAVVTFVVA). Positions 21-35 (TQEESAEFNEVEESR) are excised as a propeptide. Intrachain disulfides connect cysteine 39/cysteine 55, cysteine 47/cysteine 60, cysteine 54/cysteine 71, and cysteine 62/cysteine 69. Residue serine 81 is modified to D-serine (Ser).

This sequence belongs to the neurotoxin 02 (plectoxin) family. 03 (omega-agtx) subfamily. In terms of processing, the toxin with D-Ser (named omega-aga IVC) is 80-90 fold more potent than that with L-Ser (omega-aga IVB) against Cav2.1/CACNA1A (P-type) channels in rat cerebellar Purkinje neurons and is more resistant to proteases. The epimerization is done by the venom peptide isomerase heterodimer. As to expression, expressed by the venom gland.

It localises to the secreted. Functionally, antagonist of voltage-gated Cav2.1/CACNA1A (P-type) calcium channels. Paralyzes insect by blocking neuromuscular transmission. The polypeptide is Omega-agatoxin-Aa4b (Agelenopsis aperta (North American funnel-web spider)).